We begin with the raw amino-acid sequence, 128 residues long: Phosphoribosyl-AMP cyclohydrolase (128 aa).

Residue aspartate 86 participates in Mg(2+) binding. Zn(2+) is bound at residue cysteine 87. Mg(2+)-binding residues include aspartate 88 and aspartate 90. Zn(2+) contacts are provided by cysteine 103 and cysteine 110.

This sequence belongs to the PRA-CH family. As to quaternary structure, homodimer. It depends on Mg(2+) as a cofactor. The cofactor is Zn(2+).

It is found in the cytoplasm. The catalysed reaction is 1-(5-phospho-beta-D-ribosyl)-5'-AMP + H2O = 1-(5-phospho-beta-D-ribosyl)-5-[(5-phospho-beta-D-ribosylamino)methylideneamino]imidazole-4-carboxamide. Its pathway is amino-acid biosynthesis; L-histidine biosynthesis; L-histidine from 5-phospho-alpha-D-ribose 1-diphosphate: step 3/9. In terms of biological role, catalyzes the hydrolysis of the adenine ring of phosphoribosyl-AMP. This Roseobacter denitrificans (strain ATCC 33942 / OCh 114) (Erythrobacter sp. (strain OCh 114)) protein is Phosphoribosyl-AMP cyclohydrolase.